The sequence spans 409 residues: Glycosyltransferase GtfC (409 aa).

It belongs to the glycosyltransferase 28 family.

It carries out the reaction dTDP-beta-L-vancosamine + devancoaminyl-vancomycin = epivancomycin + dTDP + H(+). The catalysed reaction is chloroorienticin B + dTDP-beta-L-vancosamine = chloroeremomycin + dTDP + H(+). The protein operates within antibiotic biosynthesis; vancomycin biosynthesis. In terms of biological role, catalyzes the attachment of dTDP-L-4-epi-vancosamine to chloroorienticin B to form chloroeremomycin in the biosynthesis of glycopeptide antibiotic chloroeremomycin, a member of the vancomycin group of antibiotics. Also able to use dTDP-L-4-epi-vancosamine and devancoaminyl-vancomycin (DVV) to create epivancomycin. Acts downstream of GtfA. This Amycolatopsis orientalis (Nocardia orientalis) protein is Glycosyltransferase GtfC (gtfC).